Here is a 202-residue protein sequence, read N- to C-terminus: Small ribosomal subunit protein uS4 (202 aa).

The segment at 15-42 is disordered; that stretch reads LGDLPGLTRKAAKRSYPPGQHGQARRKR. The S4 RNA-binding domain maps to 90–152; the sequence is NRLDNVCFRI…KCSKLLAEAN (63 aa).

This sequence belongs to the universal ribosomal protein uS4 family. In terms of assembly, part of the 30S ribosomal subunit. Contacts protein S5. The interaction surface between S4 and S5 is involved in control of translational fidelity.

Its function is as follows. One of the primary rRNA binding proteins, it binds directly to 16S rRNA where it nucleates assembly of the body of the 30S subunit. In terms of biological role, with S5 and S12 plays an important role in translational accuracy. The sequence is that of Small ribosomal subunit protein uS4 from Synechococcus sp. (strain CC9311).